The sequence spans 31 residues: Cytochrome b6-f complex subunit 6 (31 aa).

The helical transmembrane segment at 4–24 (ITSYFGFLLAVLIITSSLFIG) threads the bilayer.

This sequence belongs to the PetL family. In terms of assembly, the 4 large subunits of the cytochrome b6-f complex are cytochrome b6, subunit IV (17 kDa polypeptide, PetD), cytochrome f and the Rieske protein, while the 4 small subunits are PetG, PetL, PetM and PetN. The complex functions as a dimer.

The protein localises to the plastid. Its subcellular location is the chloroplast thylakoid membrane. Its function is as follows. Component of the cytochrome b6-f complex, which mediates electron transfer between photosystem II (PSII) and photosystem I (PSI), cyclic electron flow around PSI, and state transitions. PetL is important for photoautotrophic growth as well as for electron transfer efficiency and stability of the cytochrome b6-f complex. In Phaseolus vulgaris (Kidney bean), this protein is Cytochrome b6-f complex subunit 6.